A 340-amino-acid polypeptide reads, in one-letter code: Protein RecA (340 aa).

65 to 72 (GPESGGKT) serves as a coordination point for ATP.

This sequence belongs to the RecA family.

It is found in the cytoplasm. In terms of biological role, can catalyze the hydrolysis of ATP in the presence of single-stranded DNA, the ATP-dependent uptake of single-stranded DNA by duplex DNA, and the ATP-dependent hybridization of homologous single-stranded DNAs. It interacts with LexA causing its activation and leading to its autocatalytic cleavage. The chain is Protein RecA from Thermus thermophilus (strain ATCC 27634 / DSM 579 / HB8).